A 493-amino-acid polypeptide reads, in one-letter code: Guanosine-5'-triphosphate,3'-diphosphate pyrophosphatase (493 aa).

The protein belongs to the GppA/Ppx family. GppA subfamily.

It carries out the reaction guanosine 3'-diphosphate 5'-triphosphate + H2O = guanosine 3',5'-bis(diphosphate) + phosphate + H(+). The protein operates within purine metabolism; ppGpp biosynthesis; ppGpp from GTP: step 2/2. In terms of biological role, catalyzes the conversion of pppGpp to ppGpp. Guanosine pentaphosphate (pppGpp) is a cytoplasmic signaling molecule which together with ppGpp controls the 'stringent response', an adaptive process that allows bacteria to respond to amino acid starvation, resulting in the coordinated regulation of numerous cellular activities. In Salmonella paratyphi B (strain ATCC BAA-1250 / SPB7), this protein is Guanosine-5'-triphosphate,3'-diphosphate pyrophosphatase.